We begin with the raw amino-acid sequence, 527 residues long: QDQVIKFTTEGATSQSYKQFIEALRQRLTGGLIHGIPVLPDPTTLQERNRYISVELSNSDTESIEAGIDVSNAYVVAYRAGNRSYFLRDAPTSASRYLFTGTQQYSLRFNGSYIDLERLARQTRQQIPLGLQALRHAISFLQSGTDDQEIARTLIVIIQMASEAARYRFISYRVGVSIRTNTAFQPDAAMISLENNWDNLSGGVQQSVQDTFPNAVTLRSVNNQPVIVDSLTHQSVAVLALMLFVCNPPNANQSPLLIRSIVEKSKICSSRYEPTVRIGGRNGMCVDVYDDGYHNGNRIIAWKCKDRLEENQLWTLKSDKTIRSNGKCLTTEGYAPGNYVMIYDCTSAVAEATYWEIWDNGTIINPKSALVLSAESSSMGGTLTVQTNEYLMRQGWRTGNNTSPFVTSISGYSDLCMQAQGSNVWLAYCDNNKKEQQWALYTDGSIRSVQNTNNCLTSKDHKQGSPIVLMACSNGWASQRWLFRNDGSIYNLHDDMVMDVKRSDPSLKEIILHPYHGKPNQIWLTLF.

Glutamine 1 is modified (pyrrolidone carboxylic acid). Asparagine 110 carries N-linked (GlcNAc...) asparagine glycosylation. The active site involves glutamate 163. 3 cysteine pairs are disulfide-bonded: cysteine 246–cysteine 268, cysteine 285–cysteine 304, and cysteine 328–cysteine 345. Residues 272 to 399 (YEPTVRIGGR…YLMRQGWRTG (128 aa)) form the Ricin B-type lectin 1 domain. The 1-alpha repeat unit spans residues 282-324 (NGMCVDVYDDGYHNGNRIIAWKCKDRLEENQLWTLKSDKTIRS). The 1-beta repeat unit spans residues 325-365 (NGKCLTTEGYAPGNYVMIYDCTSAVAEATYWEIWDNGTIIN). 2 N-linked (GlcNAc...) asparagine glycosylation sites follow: asparagine 360 and asparagine 400. The stretch at 368–400 (SALVLSAESSSMGGTLTVQTNEYLMRQGWRTGN) is one 1-gamma repeat. Positions 402–526 (TSPFVTSISG…GKPNQIWLTL (125 aa)) constitute a Ricin B-type lectin 2 domain. The 2-alpha repeat unit spans residues 413 to 448 (SDLCMQAQGSNVWLAYCDNNKKEQQWALYTDGSIRS). 2 disulfide bridges follow: cysteine 416-cysteine 429 and cysteine 455-cysteine 472. Residues 452–491 (TNNCLTSKDHKQGSPIVLMACSNGWASQRWLFRNDGSIYN) form a 2-beta repeat. Residues 494–527 (DDMVMDVKRSDPSLKEIILHPYHGKPNQIWLTLF) form a 2-gamma repeat.

This sequence in the N-terminal section; belongs to the ribosome-inactivating protein family. Type 2 RIP subfamily. As to quaternary structure, disulfide-linked dimer of A and B chains.

The catalysed reaction is Endohydrolysis of the N-glycosidic bond at one specific adenosine on the 28S rRNA.. The A chain is responsible for inhibiting protein synthesis through the catalytic inactivation of 60S ribosomal subunits by removing adenine from position 4,324 of 28S rRNA. Abrin-a is more toxic than ricin. Functionally, the B chain is a galactose-specific lectin that facilitates the binding of abrin to the cell membrane that precedes endocytosis. The protein is Abrin-b of Abrus precatorius (Indian licorice).